Here is a 100-residue protein sequence, read N- to C-terminus: Small ribosomal subunit protein uS14c (100 aa).

It belongs to the universal ribosomal protein uS14 family. In terms of assembly, part of the 30S ribosomal subunit.

It localises to the plastid. Its subcellular location is the chloroplast. In terms of biological role, binds 16S rRNA, required for the assembly of 30S particles. The sequence is that of Small ribosomal subunit protein uS14c from Adiantum capillus-veneris (Maidenhair fern).